The sequence spans 348 residues: Centromere protein N-A (348 aa).

The protein belongs to the CENP-N/CHL4 family.

The protein resides in the nucleus. The protein localises to the chromosome. It is found in the centromere. In terms of biological role, probable component of a centromeric complex involved in assembly of kinetochore proteins, mitotic progression and chromosome segregation. The polypeptide is Centromere protein N-A (cenpn-a) (Xenopus laevis (African clawed frog)).